The sequence spans 429 residues: Gamma-glutamyl phosphate reductase (429 aa).

It belongs to the gamma-glutamyl phosphate reductase family.

The protein resides in the cytoplasm. The enzyme catalyses L-glutamate 5-semialdehyde + phosphate + NADP(+) = L-glutamyl 5-phosphate + NADPH + H(+). The protein operates within amino-acid biosynthesis; L-proline biosynthesis; L-glutamate 5-semialdehyde from L-glutamate: step 2/2. Functionally, catalyzes the NADPH-dependent reduction of L-glutamate 5-phosphate into L-glutamate 5-semialdehyde and phosphate. The product spontaneously undergoes cyclization to form 1-pyrroline-5-carboxylate. The chain is Gamma-glutamyl phosphate reductase from Bradyrhizobium sp. (strain ORS 278).